A 451-amino-acid polypeptide reads, in one-letter code: Arginine biosynthesis bifunctional protein ArgJ, mitochondrial (451 aa).

Substrate contacts are provided by Thr-180, Lys-209, Thr-220, Glu-307, Asn-446, and Thr-451. The active-site Nucleophile is the Thr-220.

This sequence belongs to the ArgJ family. As to quaternary structure, heterodimer of an alpha and a beta chain. Post-translationally, the alpha and beta chains are autoproteolytically processed from a single precursor protein within the mitochondrion.

The protein resides in the mitochondrion matrix. The enzyme catalyses N(2)-acetyl-L-ornithine + L-glutamate = N-acetyl-L-glutamate + L-ornithine. It carries out the reaction L-glutamate + acetyl-CoA = N-acetyl-L-glutamate + CoA + H(+). It functions in the pathway amino-acid biosynthesis; L-arginine biosynthesis; L-ornithine and N-acetyl-L-glutamate from L-glutamate and N(2)-acetyl-L-ornithine (cyclic): step 1/1. The protein operates within amino-acid biosynthesis; L-arginine biosynthesis; N(2)-acetyl-L-ornithine from L-glutamate: step 1/4. Functionally, catalyzes two activities which are involved in the cyclic version of arginine biosynthesis: the synthesis of acetylglutamate from glutamate and acetyl-CoA, and of ornithine by transacetylation between acetylornithine and glutamate. The chain is Arginine biosynthesis bifunctional protein ArgJ, mitochondrial from Fusarium vanettenii (strain ATCC MYA-4622 / CBS 123669 / FGSC 9596 / NRRL 45880 / 77-13-4) (Fusarium solani subsp. pisi).